Consider the following 107-residue polypeptide: UPF0102 protein CTN_0433 (107 aa).

This sequence belongs to the UPF0102 family.

In Thermotoga neapolitana (strain ATCC 49049 / DSM 4359 / NBRC 107923 / NS-E), this protein is UPF0102 protein CTN_0433.